Consider the following 347-residue polypeptide: Purine-rich element-binding protein gamma (347 aa).

Disordered regions lie at residues 1–34 (MERARRRGGGGGRGRGGKNVGGSGLSKSRLYPQA) and 133–169 (GHRQEHGHSKEQGSRRRQKHSAPSPPVSVGSEEHPHS). Gly residues predominate over residues 9 to 24 (GGGGRGRGGKNVGGSG). The DNA-binding element occupies 51 to 293 (AGGAAEIQEL…GIFLKVSEVR (243 aa)). A compositionally biased stretch (basic and acidic residues) spans 134–146 (HRQEHGHSKEQGS). Residues S160, S163, and S339 each carry the phosphoserine modification.

The protein belongs to the PUR DNA-binding protein family. As to expression, isoform 1 is expressed in testis and glioblastoma. Isoform 2 is expressed in fetal lung.

The protein localises to the nucleus. This is Purine-rich element-binding protein gamma (PURG) from Homo sapiens (Human).